The primary structure comprises 400 residues: Glutamyl-tRNA reductase (400 aa).

Residues 45–48 (TCNR), Ser-103, 108–110 (EDQ), and Gln-114 each bind substrate. Cys-46 functions as the Nucleophile in the catalytic mechanism. Position 179–184 (179–184 (GYGEIG)) interacts with NADP(+).

This sequence belongs to the glutamyl-tRNA reductase family. As to quaternary structure, homodimer.

It carries out the reaction (S)-4-amino-5-oxopentanoate + tRNA(Glu) + NADP(+) = L-glutamyl-tRNA(Glu) + NADPH + H(+). It participates in porphyrin-containing compound metabolism; protoporphyrin-IX biosynthesis; 5-aminolevulinate from L-glutamyl-tRNA(Glu): step 1/2. Its function is as follows. Catalyzes the NADPH-dependent reduction of glutamyl-tRNA(Glu) to glutamate 1-semialdehyde (GSA). This Clostridium perfringens (strain ATCC 13124 / DSM 756 / JCM 1290 / NCIMB 6125 / NCTC 8237 / Type A) protein is Glutamyl-tRNA reductase.